The sequence spans 264 residues: Sororin (264 aa).

The tract at residues 1–45 is disordered; sequence MAERRTRSGGAAQRSGPRTSLTKPSKSSKRKSGSDLPNSFSEIWP. 5 positions are modified to phosphoserine: Ser20, Ser32, Ser34, Ser78, and Ser82. The KEN box motif lies at 87–89; sequence KEN. Phosphothreonine is present on Thr97. Ser106 is modified (phosphoserine). 3 positions are modified to phosphothreonine: Thr110, Thr114, and Thr159. Positions 166–168 match the FGF motif motif; that stretch reads FGF. Ser222 is modified (phosphoserine). The C-terminal Sororin domain stretch occupies residues 242 to 264; that stretch reads LDKWAVAMNAEFEAAEQFELLIE.

Belongs to the sororin family. In terms of assembly, interacts with the APC/C complex. Interacts with the chromatin-bound cohesin complex; the interaction is indirect, occurs after DNA replication and requires acetylation of the cohesin component SMC3. Interacts (via the FGF motif) with PDS5A and PDS5B; the interaction is direct and prevents the interaction of PDS5A with WAPL. Phosphorylated. Phosphorylation, as cells enter mitosis, disrupts the interaction with PDS5A and relieves the inhibition of WAPL by CDCA5. In terms of processing, ubiquitinated by the APC/C complex in G1, leading to its degradation.

It is found in the nucleus. Its subcellular location is the chromosome. The protein localises to the cytoplasm. Its function is as follows. Regulator of sister chromatid cohesion in mitosis stabilizing cohesin complex association with chromatin. May antagonize the action of WAPL which stimulates cohesin dissociation from chromatin. Cohesion ensures that chromosome partitioning is accurate in both meiotic and mitotic cells and plays an important role in DNA repair. Required for efficient DNA double-stranded break repair. This Mus musculus (Mouse) protein is Sororin (Cdca5).